We begin with the raw amino-acid sequence, 466 residues long: MDQKLLTDFRSELLDSRFGAKAISTIAESKRFPLHEMRDDVAFQIINDELYLDGNARQNLATFCQTWDDENVHKLMDLSINKNWIDKEEYPQSAAIDLRCVNMVADLWHAPAPKNGQAVGTNTIGSSEACMLGGMAMKWRWRKRMEAAGKPTDKPNLVCGPVQICWHKFARYWDVELREIPMRPGQLFMDPKRMIEACDENTIGVVPTFGVTYTGNYEFPQPLHDALDKFQADTGIDIDMHIDAASGGFLAPFVAPDIVWDFRLPRVKSISASGHKFGLAPLGCGWVIWRDEEALPQELVFNVDYLGGQIGTFAINFSRPAGQVIAQYYEFLRLGREGYTKVQNASYQVAAYLADEIAKQGPYEFICTGRPDEGIPAVCFKLKDGEDPGYTLYDLSERLRLRGWQVPAFTLGGEATDIVVMRIMCRRGFEMDFAELLLEDYKASLKYLSDHPKLQGIAQQNSFKHT.

Substrate is bound by residues threonine 62 and asparagine 83. Residues 126 to 127 (SS), threonine 212, and histidine 275 each bind pyridoxal 5'-phosphate. At lysine 276 the chain carries N6-(pyridoxal phosphate)lysine.

The protein belongs to the group II decarboxylase family. Homohexamer. Requires pyridoxal 5'-phosphate as cofactor.

It catalyses the reaction L-glutamate + H(+) = 4-aminobutanoate + CO2. Functionally, converts glutamate to gamma-aminobutyrate (GABA), consuming one intracellular proton in the reaction. The gad system helps to maintain a near-neutral intracellular pH when cells are exposed to extremely acidic conditions. The ability to survive transit through the acidic conditions of the stomach is essential for successful colonization of the mammalian host by commensal and pathogenic bacteria. This chain is Glutamate decarboxylase alpha (gadA), found in Shigella flexneri.